The chain runs to 510 residues: Bifunctional purine biosynthesis protein PurH (510 aa).

The MGS-like domain maps to 1–142 (MRALISVSDK…KNFKDVLIVT (142 aa)).

It belongs to the PurH family.

The enzyme catalyses (6R)-10-formyltetrahydrofolate + 5-amino-1-(5-phospho-beta-D-ribosyl)imidazole-4-carboxamide = 5-formamido-1-(5-phospho-D-ribosyl)imidazole-4-carboxamide + (6S)-5,6,7,8-tetrahydrofolate. The catalysed reaction is IMP + H2O = 5-formamido-1-(5-phospho-D-ribosyl)imidazole-4-carboxamide. It functions in the pathway purine metabolism; IMP biosynthesis via de novo pathway; 5-formamido-1-(5-phospho-D-ribosyl)imidazole-4-carboxamide from 5-amino-1-(5-phospho-D-ribosyl)imidazole-4-carboxamide (10-formyl THF route): step 1/1. The protein operates within purine metabolism; IMP biosynthesis via de novo pathway; IMP from 5-formamido-1-(5-phospho-D-ribosyl)imidazole-4-carboxamide: step 1/1. This chain is Bifunctional purine biosynthesis protein PurH, found in Campylobacter curvus (strain 525.92).